Here is a 623-residue protein sequence, read N- to C-terminus: Zona pellucida sperm-binding protein 1 (623 aa).

An N-terminal signal peptide occupies residues 1–20 (MAWGCFVVLLLLAAAPLRLG). Pyrrolidone carboxylic acid is present on Gln21. Residues 21–590 (QRLHLEPGFE…GSSRNSSSRM (570 aa)) are Extracellular-facing. Residues Asn49 and Asn68 are each glycosylated (N-linked (GlcNAc...) asparagine). A disordered region spans residues 182 to 201 (IHPTPAPPSLGPGPAGSTVP). A P-type domain is found at 226–266 (ERCQVASGHIPCMVNGSSKETCQQAGCCYDSTKEEPCYYGN). 3 disulfide bridges follow: Cys228/Cys253, Cys237/Cys252, and Cys247/Cys262. Asn240 is a glycosylation site (N-linked (GlcNAc...) asparagine). The 272-residue stretch at 271 to 542 (QCFKSGYFTL…DTCSTTCDSG (272 aa)) folds into the ZP domain. Asn371 carries an N-linked (GlcNAc...) asparagine glycan. Cys449 and Cys470 form a disulfide bridge. A propeptide spans 547 to 623 (RRSSGHHNIT…AQKLWEGIRY (77 aa)) (removed in mature form). N-linked (GlcNAc...) asparagine glycans are attached at residues Asn554 and Asn585. A helical membrane pass occupies residues 591–611 (LLLLLAITLALAAGIFVGLIW). At 612–623 (AWAQKLWEGIRY) the chain is on the cytoplasmic side.

The protein belongs to the ZP domain family. ZPB subfamily. Polymers of ZP2 and ZP3 organized into long filaments cross-linked by ZP1 homodimers. Interacts with ZP3. Proteolytically cleaved before the transmembrane segment to yield the secreted ectodomain incorporated in the zona pellucida. In terms of processing, O-glycosylated. Expressed in oocytes.

The protein resides in the zona pellucida. It localises to the cell membrane. Its function is as follows. Component of the zona pellucida, an extracellular matrix surrounding oocytes which mediates sperm binding, induction of the acrosome reaction and prevents post-fertilization polyspermy. The zona pellucida is composed of 3 to 4 glycoproteins, ZP1, ZP2, ZP3, and ZP4. ZP1 ensures the structural integrity of the zona pellucida. The polypeptide is Zona pellucida sperm-binding protein 1 (Zp1) (Mus musculus (Mouse)).